The following is a 330-amino-acid chain: ADP-L-glycero-D-manno-heptose-6-epimerase (330 aa).

NADP(+) contacts are provided by residues 11 to 12 (FI), 32 to 33 (DN), Lys-39, Lys-54, 75 to 79 (EGACS), and Asn-92. The Proton acceptor role is filled by Tyr-139. Lys-143 is a binding site for NADP(+). Substrate is bound at residue Asn-168. 2 residues coordinate NADP(+): Val-169 and Lys-177. Lys-177 serves as the catalytic Proton acceptor. Substrate is bound by residues Arg-179, His-186, 200 to 203 (FGEY), Arg-213, and Tyr-292.

Belongs to the NAD(P)-dependent epimerase/dehydratase family. HldD subfamily. As to quaternary structure, homopentamer. NADP(+) serves as cofactor.

It catalyses the reaction ADP-D-glycero-beta-D-manno-heptose = ADP-L-glycero-beta-D-manno-heptose. It participates in nucleotide-sugar biosynthesis; ADP-L-glycero-beta-D-manno-heptose biosynthesis; ADP-L-glycero-beta-D-manno-heptose from D-glycero-beta-D-manno-heptose 7-phosphate: step 4/4. In terms of biological role, catalyzes the interconversion between ADP-D-glycero-beta-D-manno-heptose and ADP-L-glycero-beta-D-manno-heptose via an epimerization at carbon 6 of the heptose. The polypeptide is ADP-L-glycero-D-manno-heptose-6-epimerase (Burkholderia vietnamiensis (strain G4 / LMG 22486) (Burkholderia cepacia (strain R1808))).